The primary structure comprises 192 residues: Molybdenum cofactor cytidylyltransferase (192 aa).

D101 serves as a coordination point for Mg(2+).

Monomer. Interacts with the Moco-binding chaperone PaoD. Mg(2+) serves as cofactor. It depends on Mn(2+) as a cofactor.

The catalysed reaction is Mo-molybdopterin + CTP + H(+) = Mo-molybdopterin cytosine dinucleotide + diphosphate. Transfers a CMP moiety from CTP to Mo-molybdopterin (Mo-MPT) cofactor (Moco or molybdenum cofactor) to form Mo-molybdopterin cytosine dinucleotide (Mo-MCD) cofactor. Is specific for CTP; other nucleotides such as ATP and GTP cannot be utilized. Is also able to convert MPT to MCD in the absence of molybdate, however, with only one catalytic turnover. In Escherichia coli (strain K12), this protein is Molybdenum cofactor cytidylyltransferase (mocA).